The primary structure comprises 95 residues: Co-chaperonin GroES (95 aa).

It belongs to the GroES chaperonin family. As to quaternary structure, heptamer of 7 subunits arranged in a ring. Interacts with the chaperonin GroEL.

Its subcellular location is the cytoplasm. Together with the chaperonin GroEL, plays an essential role in assisting protein folding. The GroEL-GroES system forms a nano-cage that allows encapsulation of the non-native substrate proteins and provides a physical environment optimized to promote and accelerate protein folding. GroES binds to the apical surface of the GroEL ring, thereby capping the opening of the GroEL channel. In Chlorobium phaeobacteroides (strain DSM 266 / SMG 266 / 2430), this protein is Co-chaperonin GroES.